Here is an 832-residue protein sequence, read N- to C-terminus: FAST kinase domain-containing protein 1, mitochondrial (832 aa).

One can recognise an RAP domain in the interval 765–825 (VAIEFLDSKA…KDAWIDYLRK (61 aa)).

The protein belongs to the FAST kinase family.

It localises to the mitochondrion. Functionally, may regulate the stability of some mitochondrial mRNA species. The polypeptide is FAST kinase domain-containing protein 1, mitochondrial (fastkd1) (Xenopus tropicalis (Western clawed frog)).